Reading from the N-terminus, the 1542-residue chain is ABC multidrug transporter AFR1 (1542 aa).

Disordered stretches follow at residues 1 to 84 (MSAA…LPAD) and 118 to 141 (SQQS…FSRK). The segment covering 18–41 (TATTQNPSGLANSQVTSDPVPSAT) has biased composition (polar residues). A compositionally biased stretch (basic and acidic residues) spans 60–69 (DKSVDAEKVE). Asn-207 and Asn-397 each carry an N-linked (GlcNAc...) asparagine glycan. Residues 221-473 (LKVLGIFGVN…MIGLGYRDLP (253 aa)) enclose the ABC transporter 1 domain. A run of 5 helical transmembrane segments spans residues 584-604 (FGIS…GSVY), 618-638 (GGLL…ELPS), 669-689 (VPYN…MGGL), 694-714 (GAFF…SAFF), and 726-746 (VAAR…GYMI). Residue Asn-822 is glycosylated (N-linked (GlcNAc...) asparagine). Residues 844 to 864 (FGILVGFFAFFMFLQMMFIEY) form a helical membrane-spanning segment. One can recognise an ABC transporter 2 domain in the interval 917–1159 (FTWEGLNYTV…VLIDYLERNG (243 aa)). Asn-923 carries N-linked (GlcNAc...) asparagine glycosylation. 953–960 (GASGAGKT) is an ATP binding site. The next 6 membrane-spanning stretches (helical) occupy residues 1253-1273 (WTRL…FLQL), 1284-1304 (VFAI…IEPQ), 1335-1355 (MPYS…GVGF), 1365-1385 (FFLM…AVAA), 1390-1410 (ILIA…FCGV), and 1516-1536 (FGIF…AARF).

The protein belongs to the ABC transporter superfamily. ABCG family. PDR (TC 3.A.1.205) subfamily.

The protein resides in the cell membrane. The enzyme catalyses itraconazole(in) + ATP + H2O = itraconazole(out) + ADP + phosphate + H(+). It carries out the reaction voriconazole(in) + ATP + H2O = voriconazole(out) + ADP + phosphate + H(+). The catalysed reaction is fluconazole(in) + ATP + H2O = fluconazole(out) + ADP + phosphate + H(+). In terms of biological role, major pleiotropic ABC efflux transporter that confers resistance to structurally and functionally unrelated compounds including azoles such as fluconazole (FLC), itraconazole (ITC), posaconazole (POS), and voriconazole (VRC). Is also able to efflux the eukaryote protein synthesis inhibitor cycloheximide (CHX). This is ABC multidrug transporter AFR1 from Cryptococcus deuterogattii (strain R265) (Cryptococcus gattii VGII (strain R265)).